Here is a 275-residue protein sequence, read N- to C-terminus: Structure-specific endonuclease subunit SLX1 (275 aa).

The GIY-YIG domain occupies 12 to 95; the sequence is RFFGVYLLYC…QHPHASRRLA (84 aa). The span at 148 to 161 shows a compositional bias: pro residues; the sequence is HVPLAFGPPPPQAP. Residues 148–179 form a disordered region; it reads HVPLAFGPPPPQAPAPRRRAGPFDDAEPEPDQ. An SLX1-type zinc finger spans residues 186-238; sequence CSLCAQTIQDEEGPLCCPHPGCLLRAHVICLAEEFLQEEPGQLLPLEGQCPCC.

The protein belongs to the SLX1 family. In terms of assembly, forms a heterodimer with SLX4. It depends on a divalent metal cation as a cofactor.

The protein localises to the nucleus. In terms of biological role, catalytic subunit of the SLX1-SLX4 structure-specific endonuclease that resolves DNA secondary structures generated during DNA repair and recombination. Has endonuclease activity towards branched DNA substrates, introducing single-strand cuts in duplex DNA close to junctions with ss-DNA. Has a preference for 5'-flap structures, and promotes symmetrical cleavage of static and migrating Holliday junctions (HJs). Resolves HJs by generating two pairs of ligatable, nicked duplex products. This is Structure-specific endonuclease subunit SLX1 from Homo sapiens (Human).